Reading from the N-terminus, the 341-residue chain is L-threonine 3-dehydrogenase (341 aa).

Cys38 is a binding site for Zn(2+). Residues Thr40 and His43 each act as charge relay system in the active site. Residues His63, Glu64, Cys93, Cys96, Cys99, and Cys107 each coordinate Zn(2+). NAD(+)-binding positions include Ile175, Asp195, Arg200, 262–264, and 286–287; these read LGI and IY.

The protein belongs to the zinc-containing alcohol dehydrogenase family. As to quaternary structure, homotetramer. It depends on Zn(2+) as a cofactor.

It localises to the cytoplasm. It carries out the reaction L-threonine + NAD(+) = (2S)-2-amino-3-oxobutanoate + NADH + H(+). It participates in amino-acid degradation; L-threonine degradation via oxydo-reductase pathway; glycine from L-threonine: step 1/2. Catalyzes the NAD(+)-dependent oxidation of L-threonine to 2-amino-3-ketobutyrate. This is L-threonine 3-dehydrogenase from Serratia proteamaculans (strain 568).